The primary structure comprises 87 residues: U3-theraphotoxin-Hhn1j (87 aa).

Residues 1-24 (MVNMKASMFLTFAGLVLLFVVCYA) form the signal peptide. The propeptide occupies 25-52 (SESEEKEFPKEMLSSIFAVDNDFKQEER). 3 disulfide bridges follow: cysteine 54-cysteine 67, cysteine 61-cysteine 72, and cysteine 66-cysteine 79.

The protein belongs to the neurotoxin 10 (Hwtx-1) family. 51 (Hntx-8) subfamily. Hntx-8 sub-subfamily. In terms of tissue distribution, expressed by the venom gland.

Its subcellular location is the secreted. Ion channel inhibitor. This Cyriopagopus hainanus (Chinese bird spider) protein is U3-theraphotoxin-Hhn1j.